We begin with the raw amino-acid sequence, 230 residues long: Large ribosomal subunit protein uL3 (230 aa).

Disordered stretches follow at residues 125 to 149 (QAIG…SLGD) and 210 to 230 (PNPK…VKNE).

It belongs to the universal ribosomal protein uL3 family. In terms of assembly, part of the 50S ribosomal subunit. Forms a cluster with proteins L14 and L19.

In terms of biological role, one of the primary rRNA binding proteins, it binds directly near the 3'-end of the 23S rRNA, where it nucleates assembly of the 50S subunit. The sequence is that of Large ribosomal subunit protein uL3 from Mesomycoplasma hyopneumoniae (strain 232) (Mycoplasma hyopneumoniae).